The sequence spans 521 residues: Glucose-6-phosphate isomerase (521 aa).

The active-site Proton donor is the Glu351. Active-site residues include His382 and Lys491.

This sequence belongs to the GPI family.

The protein resides in the cytoplasm. The catalysed reaction is alpha-D-glucose 6-phosphate = beta-D-fructose 6-phosphate. The protein operates within carbohydrate biosynthesis; gluconeogenesis. It functions in the pathway carbohydrate degradation; glycolysis; D-glyceraldehyde 3-phosphate and glycerone phosphate from D-glucose: step 2/4. Its function is as follows. Catalyzes the reversible isomerization of glucose-6-phosphate to fructose-6-phosphate. In Polaromonas naphthalenivorans (strain CJ2), this protein is Glucose-6-phosphate isomerase.